The primary structure comprises 349 residues: N-acetyl-gamma-glutamyl-phosphate reductase (349 aa).

Residue Cys149 is part of the active site.

The protein belongs to the NAGSA dehydrogenase family. Type 1 subfamily.

It localises to the cytoplasm. It carries out the reaction N-acetyl-L-glutamate 5-semialdehyde + phosphate + NADP(+) = N-acetyl-L-glutamyl 5-phosphate + NADPH + H(+). The protein operates within amino-acid biosynthesis; L-arginine biosynthesis; N(2)-acetyl-L-ornithine from L-glutamate: step 3/4. Its function is as follows. Catalyzes the NADPH-dependent reduction of N-acetyl-5-glutamyl phosphate to yield N-acetyl-L-glutamate 5-semialdehyde. The polypeptide is N-acetyl-gamma-glutamyl-phosphate reductase (Acinetobacter baylyi (strain ATCC 33305 / BD413 / ADP1)).